A 313-amino-acid chain; its full sequence is D-apiose import binding protein (313 aa).

Residues 1 to 26 (MKLTRRLTLAAFASVLALGTAAPAFS) form the signal peptide. D-apiofuranose is bound by residues Asn39, 115-116 (DR), 162-164 (DTN), Arg168, Asn218, Asp243, and Gln263.

The protein belongs to the bacterial solute-binding protein 2 family.

The protein localises to the periplasm. Part of an ABC transporter complex involved in D-apiose import. In Rhizobium rhizogenes (strain K84 / ATCC BAA-868) (Agrobacterium radiobacter), this protein is D-apiose import binding protein.